The chain runs to 117 residues: Large ribosomal subunit protein bL19 (117 aa).

This sequence belongs to the bacterial ribosomal protein bL19 family.

In terms of biological role, this protein is located at the 30S-50S ribosomal subunit interface and may play a role in the structure and function of the aminoacyl-tRNA binding site. The polypeptide is Large ribosomal subunit protein bL19 (Shewanella frigidimarina (strain NCIMB 400)).